We begin with the raw amino-acid sequence, 126 residues long: Bleomycin resistance protein (126 aa).

One can recognise a VOC domain in the interval 1–119 (MTDQATPNLP…DGTLLRLIQN (119 aa)).

The protein belongs to the bleomycin resistance protein family.

In terms of biological role, binding protein with a strong affinity to the bleomycin family of antibiotics. Binds to CL990; an antimitotic-antibiotic compound. The chain is Bleomycin resistance protein (ble) from Klebsiella pneumoniae.